A 553-amino-acid chain; its full sequence is Mucolipin-3 (553 aa).

Over 1–62 (MANPEVLVSS…FWARGRKPWK (62 aa)) the chain is Cytoplasmic. Residues 52 to 62 (KFWARGRKPWK) are interaction with phosphoinositides. The chain crosses the membrane as a helical span at residues 63-83 (LAIQILKIAMVTIQLVLFGLS). The Extracellular segment spans residues 84-283 (NQMVVAFKEE…VSGSIQKNTH (200 aa)). The extracellular/lumenal pore loop stretch occupies residues 104 to 118 (KGYMDRMDDTYAVYT). N-linked (GlcNAc...) asparagine glycosylation is present at Asn-138. The cysteines at positions 159 and 185 are disulfide-linked. Asn-205 is a glycosylation site (N-linked (GlcNAc...) asparagine). A disulfide bridge links Cys-238 with Cys-269. The chain crosses the membrane as a helical span at residues 284–304 (YMMIFDAFVILTCLASLVLCA). The Cytoplasmic portion of the chain corresponds to 305–341 (RSVIRGLQLQQEFVNFFLLHYKKEVSASDQMEFINGW). Residues 342 to 362 (YIMIIISDILTIVGSVLKMEI) form a helical membrane-spanning segment. Residues 363 to 371 (QAKSLTSYD) are Extracellular-facing. A helical transmembrane segment spans residues 372–392 (VCSILLGTSTMLVWLGVIRYL). At 393 to 414 (GFFAKYNLLILTLQAALPNVMR) the chain is on the cytoplasmic side. A helical transmembrane segment spans residues 415 to 435 (FCCCAAMIYLGYCFCGWIVLG). Residues 436–443 (PYHEKFRS) are Extracellular-facing. The pore-forming intramembrane region spans 444–464 (LNRVSECLFSLINGDDMFSTF). Residues 456–459 (NGDD) carry the Selectivity filter motif. Residues 465–475 (AKMQQKSYLVW) are Extracellular-facing. The helical transmembrane segment at 476 to 497 (LFSRVYLYSFISLFIYMILSLF) threads the bilayer. Residues 498–553 (IALITDTYETIKHYQQDGFPETELRKFIAECKDLPNSGKYRLEDDPPGSLLCCCKK) are Cytoplasmic-facing.

It belongs to the transient receptor (TC 1.A.4) family. Polycystin subfamily. MCOLN3 sub-subfamily. In terms of assembly, homotetramer. Can heterooligomerize with MCOLN1; heteromeric assemblies have different channel properties as compared to the respective homooligomers and may be tissue-specific. May heterooligomerize with TRPV5 to form a functional distinct ion channel. Interacts with GABARAPL2. In terms of processing, N-glycosylated. In terms of tissue distribution, expressed in the cochlea; particularly in the inner and outer hair cells (at protein level).

Its subcellular location is the early endosome membrane. The protein localises to the late endosome membrane. It is found in the cytoplasmic vesicle. The protein resides in the autophagosome membrane. It localises to the cell projection. Its subcellular location is the stereocilium membrane. The catalysed reaction is Ca(2+)(in) = Ca(2+)(out). It catalyses the reaction Mg(2+)(in) = Mg(2+)(out). The enzyme catalyses K(+)(in) = K(+)(out). It carries out the reaction Na(+)(in) = Na(+)(out). Channel activity is activated by PtdIns(3,5)P2 (phosphatidylinositol 3,5-bisphosphate). Inhibited by lumenal H(+) and Na(+). The channel pore shows dynamic behavior and undergoes spontaneous, Ca(2+)-dependent modulation when conducting Ca(2+). Functionally, nonselective cation channel probably playing a role in the regulation of membrane trafficking events. Acts as a Ca(2+)-permeable cation channel with inwardly rectifying activity. Mediates release of Ca(2+) from endosomes to the cytoplasm, contributes to endosomal acidification and is involved in the regulation of membrane trafficking and fusion in the endosomal pathway. Also permeable to Mg(2+), Na(+) and K(+). Does not seem to act as mechanosensory transduction channel in inner ear sensory hair cells. Proposed to play a critical role at the cochlear stereocilia ankle-link region during hair-bundle growth. Involved in the regulation of autophagy. Through association with GABARAPL2 may be involved in autophagosome formation possibly providing Ca(2+) for the fusion process. Through a possible and probably tissue-specific heteromerization with MCOLN1 may be at least in part involved in many lysosome-dependent cellular events. Possible heteromeric ion channel assemblies with TRPV5 show pharmacological similarity with TRPML3. The sequence is that of Mucolipin-3 (Mcoln3) from Mus musculus (Mouse).